Reading from the N-terminus, the 216-residue chain is MOB kinase activator 3C (216 aa).

The Zn(2+) site is built by Cys82, Cys87, His164, and His169.

It belongs to the MOB1/phocein family.

Functionally, may regulate the activity of kinases. This is MOB kinase activator 3C (Mob3c) from Mus musculus (Mouse).